Here is a 256-residue protein sequence, read N- to C-terminus: Homeobox protein Hox-D13a (256 aa).

Positions 191 to 250 (GRKKRVPYTKFQLKELEREYNTTKFITKENRRRIASSTNLSERQVTIWFQNRRVKDKKRP) form a DNA-binding region, homeobox.

The protein belongs to the Abd-B homeobox family.

The protein localises to the nucleus. Functionally, sequence-specific transcription factor which is part of a developmental regulatory system that provides cells with specific positional identities on the anterior-posterior axis. The polypeptide is Homeobox protein Hox-D13a (hoxd13a) (Danio rerio (Zebrafish)).